Consider the following 196-residue polypeptide: Probable thymidylate kinase (196 aa).

7-14 (GIDGAGKT) contributes to the ATP binding site.

The protein belongs to the thymidylate kinase family.

The catalysed reaction is dTMP + ATP = dTDP + ADP. The chain is Probable thymidylate kinase (tmk) from Archaeoglobus fulgidus (strain ATCC 49558 / DSM 4304 / JCM 9628 / NBRC 100126 / VC-16).